Here is a 284-residue protein sequence, read N- to C-terminus: L-ribulose-5-phosphate 3-epimerase UlaE (284 aa).

Belongs to the L-ribulose-5-phosphate 3-epimerase family.

It carries out the reaction L-ribulose 5-phosphate = L-xylulose 5-phosphate. The protein operates within cofactor degradation; L-ascorbate degradation; D-xylulose 5-phosphate from L-ascorbate: step 3/4. Its function is as follows. Catalyzes the isomerization of L-xylulose-5-phosphate to L-ribulose-5-phosphate. Is involved in the anaerobic L-ascorbate utilization. The chain is L-ribulose-5-phosphate 3-epimerase UlaE from Salmonella choleraesuis (strain SC-B67).